Here is a 397-residue protein sequence, read N- to C-terminus: N-acetyllactosaminide beta-1,3-N-acetylglucosaminyltransferase 2 (397 aa).

Topologically, residues 1 to 7 (MSVGRRR) are cytoplasmic. Residues 8-28 (IKLLGILMMANVFIYFIMEVS) traverse the membrane as a helical; Signal-anchor for type II membrane protein segment. Residues 29–397 (KSSSQEKNGK…SQLQSAHLKC (369 aa)) lie on the Lumenal side of the membrane. Residues N79, N89, N127, N173, and N219 are each glycosylated (N-linked (GlcNAc...) asparagine).

It belongs to the glycosyltransferase 31 family. In terms of assembly, interacts with B3GNT8; this interaction greatly increases B3GNT2 catalytic activity, independently of B3GNT8 enzymatic activity. Requires Mn(2+) as cofactor. As to expression, ubiquitous.

The protein localises to the golgi apparatus membrane. The enzyme catalyses a beta-D-galactosyl-(1-&gt;4)-N-acetyl-beta-D-glucosaminyl derivative + UDP-N-acetyl-alpha-D-glucosamine = an N-acetyl-beta-D-glucosaminyl-(1-&gt;3)-beta-D-galactosyl-(1-&gt;4)-N-acetyl-beta-D-glucosaminyl derivative + UDP + H(+). The protein operates within protein modification; protein glycosylation. Beta-1,3-N-acetylglucosaminyltransferase involved in the synthesis of poly-N-acetyllactosamine. Catalyzes the initiation and elongation of poly-N-acetyllactosamine chains. Shows a marked preference for Gal(beta1-4)Glc(NAc)-based acceptors. Probably constitutes the main polylactosamine synthase. The sequence is that of N-acetyllactosaminide beta-1,3-N-acetylglucosaminyltransferase 2 (B3GNT2) from Homo sapiens (Human).